The primary structure comprises 362 residues: Phosphate acyltransferase (362 aa).

Positions 343–362 are disordered; the sequence is TKKISTSTINPKTSETTKES. The span at 344-356 shows a compositional bias: polar residues; it reads KKISTSTINPKTS.

It belongs to the PlsX family. In terms of assembly, homodimer. Probably interacts with PlsY.

The protein localises to the cytoplasm. The catalysed reaction is a fatty acyl-[ACP] + phosphate = an acyl phosphate + holo-[ACP]. Its pathway is lipid metabolism; phospholipid metabolism. Functionally, catalyzes the reversible formation of acyl-phosphate (acyl-PO(4)) from acyl-[acyl-carrier-protein] (acyl-ACP). This enzyme utilizes acyl-ACP as fatty acyl donor, but not acyl-CoA. This Aster yellows witches'-broom phytoplasma (strain AYWB) protein is Phosphate acyltransferase.